Reading from the N-terminus, the 294-residue chain is Probable 3-hydroxyisobutyrate dehydrogenase (294 aa).

NAD(+) is bound by residues 3–31 and Thr93; that span reads TIAFLGLGNMGAPMSANLVGAGHVVRGFD. The active site involves Lys168. An NAD(+)-binding site is contributed by Lys243.

Belongs to the HIBADH-related family.

The catalysed reaction is 3-hydroxy-2-methylpropanoate + NAD(+) = 2-methyl-3-oxopropanoate + NADH + H(+). Its pathway is amino-acid degradation; L-valine degradation. The polypeptide is Probable 3-hydroxyisobutyrate dehydrogenase (mmsB) (Mycobacterium bovis (strain ATCC BAA-935 / AF2122/97)).